The chain runs to 521 residues: Ribonuclease Y 1 (521 aa).

The chain crosses the membrane as a helical span at residues 1–21 (MEIVISAIIGLLIGGTVVFVI). The interval 51–87 (IKKESENKAKDFESRARKNVEQDIHKQKSTLKNKESQ) is disordered. A KH domain is found at 211-271 (TVSVLALPND…VRRELARRTI (61 aa)). The HD domain occupies 337–430 (ALNQSLEVAT…VHAAYTLSSS (94 aa)).

This sequence belongs to the RNase Y family.

It localises to the cell membrane. Endoribonuclease that initiates mRNA decay. The protein is Ribonuclease Y 1 of Bdellovibrio bacteriovorus (strain ATCC 15356 / DSM 50701 / NCIMB 9529 / HD100).